Consider the following 249-residue polypeptide: Segregation and condensation protein A (249 aa).

Belongs to the ScpA family. In terms of assembly, component of a cohesin-like complex composed of ScpA, ScpB and the Smc homodimer, in which ScpA and ScpB bind to the head domain of Smc. The presence of the three proteins is required for the association of the complex with DNA.

Its subcellular location is the cytoplasm. In terms of biological role, participates in chromosomal partition during cell division. May act via the formation of a condensin-like complex containing Smc and ScpB that pull DNA away from mid-cell into both cell halves. The polypeptide is Segregation and condensation protein A (Mycoplasmopsis pulmonis (strain UAB CTIP) (Mycoplasma pulmonis)).